A 128-amino-acid chain; its full sequence is Large ribosomal subunit protein bL17 (128 aa).

This sequence belongs to the bacterial ribosomal protein bL17 family. As to quaternary structure, part of the 50S ribosomal subunit. Contacts protein L32.

In Streptococcus pyogenes serotype M49 (strain NZ131), this protein is Large ribosomal subunit protein bL17.